Here is a 558-residue protein sequence, read N- to C-terminus: T-complex protein 1 subunit gamma (558 aa).

Residues Cys381 and Cys387 are joined by a disulfide bond.

The protein belongs to the TCP-1 chaperonin family. Heterooligomeric complex of about 850 to 900 kDa that forms two stacked rings, 12 to 16 nm in diameter.

Its subcellular location is the cytoplasm. Functionally, molecular chaperone; assists the folding of proteins upon ATP hydrolysis. Known to play a role, in vitro, in the folding of actin and tubulin. This is T-complex protein 1 subunit gamma from Thalassiosira weissflogii (Marine diatom).